The following is a 216-amino-acid chain: Ras-related protein RabN1 (216 aa).

15-22 (GDYNSGKT) lines the GTP pocket. The Effector region motif lies at 37–44 (TCPSTFDL). Residues 62–66 (DTAGQ) and 128–131 (TKSD) each bind GTP. A lipid anchor (S-geranylgeranyl cysteine) is attached at Cys216.

The protein belongs to the small GTPase superfamily. Rab family.

It localises to the cell membrane. The chain is Ras-related protein RabN1 (rabN1) from Dictyostelium discoideum (Social amoeba).